Reading from the N-terminus, the 122-residue chain is Putative iron-sulfur cluster insertion protein ErpA (122 aa).

Iron-sulfur cluster is bound by residues cysteine 50, cysteine 114, and cysteine 116.

It belongs to the HesB/IscA family. As to quaternary structure, homodimer. It depends on iron-sulfur cluster as a cofactor.

Its function is as follows. Required for insertion of 4Fe-4S clusters. The protein is Putative iron-sulfur cluster insertion protein ErpA of Bordetella petrii (strain ATCC BAA-461 / DSM 12804 / CCUG 43448).